The following is a 696-amino-acid chain: Mitosis initiation protein fs(1)Ya (696 aa).

Disordered regions lie at residues 245–285, 336–379, and 457–492; these read NAST…RAWK, EHSS…YSTS, and IKFE…TPEI. Low complexity-rich tracts occupy residues 270-281 and 361-379; these read QQQQQQQQPLQQ and SESS…YSTS. Positions 448-696 are rich in charged AA; sequence TGAGINKKQI…REPIERMRRQ (249 aa). 3 positions are modified to phosphothreonine: T478, T484, and T489. 2 consecutive short sequence motifs (nuclear localization signal) follow at residues 512 to 520 and 534 to 538; these read PKKDKPKEK and QPRVR. 2 disordered regions span residues 555-586 and 603-696; these read DVGE…KLEA and PASL…MRRQ. Positions 557–569 are enriched in acidic residues; sequence GEPEVVDAEEEDE. Basic and acidic residues-rich tracts occupy residues 607–624 and 685–696; these read RGER…DKEN and RPREPIERMRRQ.

The protein localises to the nucleus envelope. The protein resides in the nucleus. It is found in the nucleoplasm. Its subcellular location is the cytoplasm. In terms of biological role, cell cycle-dependent nuclear envelope component required for embryonic mitosis. In Drosophila melanogaster (Fruit fly), this protein is Mitosis initiation protein fs(1)Ya (fs(1)Ya).